The chain runs to 405 residues: uncharacterized protein (405 aa).

This is an uncharacterized protein from Saimiri sciureus (Common squirrel monkey).